A 160-amino-acid polypeptide reads, in one-letter code: RTX-II toxin-activating lysine-acyltransferase ApxIIC (160 aa).

Residues His23 and Asp92 contribute to the active site.

This sequence belongs to the RTX toxin acyltransferase family. In terms of assembly, homodimer.

It is found in the cytoplasm. It carries out the reaction a fatty acyl-[ACP] + L-lysyl-[protein] = N(6)-(fatty acyl)-L-lysyl-[protein] + holo-[ACP] + H(+). In terms of biological role, protein-lysine acyltransferase that catalyzes fatty acylation of the protoxin, thereby converting it to the active toxin. In Actinobacillus pleuropneumoniae (Haemophilus pleuropneumoniae), this protein is RTX-II toxin-activating lysine-acyltransferase ApxIIC (apxIIC).